Here is an 86-residue protein sequence, read N- to C-terminus: Gas vesicle protein M (86 aa).

Belongs to the gas vesicle GvpA family. As to quaternary structure, gvpF to GvpM interact with each other in vitro, and may form multi-subunit complex(es). Might interact with GvpA.

The protein localises to the gas vesicle. In terms of biological role, proteins GvpF to GvpM might be involved in nucleating gas vesicle formation. A minor component of the gas vesicle. Gas vesicles are small, hollow, gas filled protein structures found in some microorganisms. They allow positioning of halobacteria at the optimal depth for growth in the poorly aerated, shallow brine pools of their habitat. Expression of a 9.5 kb mc-vac DNA fragment containing 2 divergently transcribed regions (gvpD-gvpE-gvpF-gvpG-gvpH-gvpI-gvpJ-gvpK-gvpL-gvpM and gvpA-gvpC-gvpN-gvpO) allows H.volcanii to produce gas vesicles. This Haloferax mediterranei (strain ATCC 33500 / DSM 1411 / JCM 8866 / NBRC 14739 / NCIMB 2177 / R-4) (Halobacterium mediterranei) protein is Gas vesicle protein M.